Here is a 375-residue protein sequence, read N- to C-terminus: Eukaryotic translation initiation factor 3 subunit M (375 aa).

Residues A180–H339 form the PCI domain.

It belongs to the eIF-3 subunit M family. Component of the eukaryotic translation initiation factor 3 (eIF-3) complex, which is composed of 13 subunits: eif3a, eif3b, eif3c, eif3d, eif3e, eif3f, eif3g, eif3h, eif3i, eif3j, eif3k, eif3l and eif3m.

It localises to the cytoplasm. In terms of biological role, component of the eukaryotic translation initiation factor 3 (eIF-3) complex, which is involved in protein synthesis of a specialized repertoire of mRNAs and, together with other initiation factors, stimulates binding of mRNA and methionyl-tRNAi to the 40S ribosome. The eIF-3 complex specifically targets and initiates translation of a subset of mRNAs involved in cell proliferation. This Danio rerio (Zebrafish) protein is Eukaryotic translation initiation factor 3 subunit M (eif3m).